The sequence spans 268 residues: Ribosomal RNA small subunit methyltransferase A (268 aa).

S-adenosyl-L-methionine contacts are provided by N10, I12, G37, E58, D83, and N107.

This sequence belongs to the class I-like SAM-binding methyltransferase superfamily. rRNA adenine N(6)-methyltransferase family. RsmA subfamily.

The protein localises to the cytoplasm. It carries out the reaction adenosine(1518)/adenosine(1519) in 16S rRNA + 4 S-adenosyl-L-methionine = N(6)-dimethyladenosine(1518)/N(6)-dimethyladenosine(1519) in 16S rRNA + 4 S-adenosyl-L-homocysteine + 4 H(+). In terms of biological role, specifically dimethylates two adjacent adenosines (A1518 and A1519) in the loop of a conserved hairpin near the 3'-end of 16S rRNA in the 30S particle. May play a critical role in biogenesis of 30S subunits. The sequence is that of Ribosomal RNA small subunit methyltransferase A from Caldanaerobacter subterraneus subsp. tengcongensis (strain DSM 15242 / JCM 11007 / NBRC 100824 / MB4) (Thermoanaerobacter tengcongensis).